The chain runs to 338 residues: Fructose-1,6-bisphosphatase class 1 (338 aa).

The Mg(2+) site is built by Glu-91, Asp-113, Leu-115, and Asp-116. Substrate-binding positions include 116-119, Asn-208, and Lys-274; that span reads DGSS. Residue Glu-280 participates in Mg(2+) binding.

This sequence belongs to the FBPase class 1 family. As to quaternary structure, homotetramer. It depends on Mg(2+) as a cofactor.

The protein resides in the cytoplasm. It catalyses the reaction beta-D-fructose 1,6-bisphosphate + H2O = beta-D-fructose 6-phosphate + phosphate. Its pathway is carbohydrate biosynthesis; gluconeogenesis. The polypeptide is Fructose-1,6-bisphosphatase class 1 (Ralstonia pickettii (strain 12J)).